Reading from the N-terminus, the 445-residue chain is Succinate--CoA ligase [ADP-forming] subunit beta, mitochondrial (445 aa).

Residues 1-17 constitute a mitochondrion transit peptide; it reads MLSNIVKKTIQSSKNLK. Residues 43–270 enclose the ATP-grasp domain; that stretch reads QKMMKSYGIN…DNAAFRHPDI (228 aa). ATP-binding positions include lysine 80 and 87–89; that span reads GRG. Asparagine 240 and aspartate 254 together coordinate Mg(2+). Residues asparagine 305 and 362–364 contribute to the substrate site; that span reads GIM.

The protein belongs to the succinate/malate CoA ligase beta subunit family. ATP-specific subunit beta subfamily. As to quaternary structure, heterodimer of an alpha and a beta subunit. The beta subunit determines specificity for ATP. Mg(2+) serves as cofactor.

It is found in the mitochondrion. The catalysed reaction is succinate + ATP + CoA = succinyl-CoA + ADP + phosphate. It functions in the pathway carbohydrate metabolism; tricarboxylic acid cycle; succinate from succinyl-CoA (ligase route): step 1/1. ATP-specific succinyl-CoA synthetase functions in the citric acid cycle (TCA), coupling the hydrolysis of succinyl-CoA to the synthesis of ATP and thus represents the only step of substrate-level phosphorylation in the TCA. The beta subunit provides nucleotide specificity of the enzyme and binds the substrate succinate, while the binding sites for coenzyme A and phosphate are found in the alpha subunit. The polypeptide is Succinate--CoA ligase [ADP-forming] subunit beta, mitochondrial (scsC) (Dictyostelium discoideum (Social amoeba)).